The sequence spans 283 residues: Nucleoid occlusion protein (283 aa).

The disordered stretch occupies residues 1 to 21; sequence MKHSFSRFFGFGEKEEEPEIA. A DNA-binding region (H-T-H motif) is located at residues 148–167; the sequence is EALAQRLGKGQSTIANKLRL.

The protein belongs to the ParB family.

It localises to the cytoplasm. Its subcellular location is the nucleoid. In terms of biological role, effects nucleoid occlusion by binding relatively nonspecifically to DNA and preventing the assembly of the division machinery in the vicinity of the nucleoid, especially under conditions that disturb the cell cycle. It helps to coordinate cell division and chromosome segregation by preventing the formation of the Z ring through the nucleoid, which would cause chromosome breakage. The chain is Nucleoid occlusion protein from Bacillus velezensis (strain DSM 23117 / BGSC 10A6 / LMG 26770 / FZB42) (Bacillus amyloliquefaciens subsp. plantarum).